We begin with the raw amino-acid sequence, 116 residues long: Non-specific lipid-transfer protein (116 aa).

An N-terminal signal peptide occupies residues 1–25; sequence MASMVMNVLCVAVACMVFSASYADA. Disulfide bonds link C28–C75, C38–C52, C53–C98, and C73–C112.

Belongs to the plant LTP family.

Functionally, plant non-specific lipid-transfer proteins transfer phospholipids as well as galactolipids across membranes. May play a role in wax or cutin deposition in the cell walls of expanding epidermal cells and certain secretory tissues. This Gerbera hybrida (Daisy) protein is Non-specific lipid-transfer protein.